The primary structure comprises 275 residues: MLTPMVAGGVVFPGLFLLSKNTLQRLPQLRWEEADAVIVSARLVSSVQAIMASTAGYIVSTSCKHIIDDQHWLSSAYTQFAVPYFIYDIYAMFLCHWHKHQVKGHGGEDGTPRALGSTWAVVRGYLHKEFLMVLHHAAMVLVCFPLSVVWRQGKGDFFLGCMLMAEVSTPFVCLGKILIQYKQQHTLLHKVNGALMLLSFLCCRVLLFPYLYWAYGRHAGLPLLSVPMAIPAHVNLGAALLLAPQLYWFFLICRGACRLFRPRGSPPPSPCQTQD.

Positions Ala34–Arg261 constitute a TLC domain. The next 4 helical transmembrane spans lie at Phe130–Trp150, Leu159–Ile179, Ala194–Ala214, and Ala232–Ile252.

In terms of tissue distribution, each isoform has a distinct expression pattern. Isoform 1 is highly expressed in brain. Isoform 2 is expressed at low levels, if any, in all analyzed tissues, with slightly higher levels in testis. Isoform 3 is expressed at very high levels in testis and, at lower levels, in white adipose tissue. In epididymal fat, isoform 3 is expressed at higher levels in obese mice compared with lean mice. By contrast, isoform 1 and 2 levels are significantly lower in obese mice compared with lean mice.

The protein localises to the golgi apparatus membrane. It localises to the endoplasmic reticulum membrane. The catalysed reaction is sphing-4-enine + octadecanoyl-CoA = N-octadecanoylsphing-4-enine + CoA + H(+). It catalyses the reaction eicosanoyl-CoA + sphing-4-enine = N-eicosanoyl-sphing-4-enine + CoA + H(+). The enzyme catalyses sphing-4-enine + hexadecanoyl-CoA = N-hexadecanoylsphing-4-enine + CoA + H(+). Functionally, involved in ceramide synthesis. In vitro, isoform 3 stimulates the production of C16-, C18- and C20-ceramides, isoform 1 slightly increases the levels of C18- and C20-ceramides, while isoform 2 exhibits only minimal activity. May interfere with adipogenesis by stimulating ceramide synthesis. The protein is Ceramide synthase (Tlcd3b) of Mus musculus (Mouse).